Reading from the N-terminus, the 602-residue chain is UvrABC system protein C (602 aa).

The 78-residue stretch at 15–92 (DLPGSYQMKD…IQKYQPYYNI (78 aa)) folds into the GIY-YIG domain. The UVR domain maps to 197–232 (GKAKASLTAKMERAAKNLQFERAAEIRDQLHYIEQT).

The protein belongs to the UvrC family. As to quaternary structure, interacts with UvrB in an incision complex.

The protein localises to the cytoplasm. In terms of biological role, the UvrABC repair system catalyzes the recognition and processing of DNA lesions. UvrC both incises the 5' and 3' sides of the lesion. The N-terminal half is responsible for the 3' incision and the C-terminal half is responsible for the 5' incision. This Lacticaseibacillus paracasei (strain ATCC 334 / BCRC 17002 / CCUG 31169 / CIP 107868 / KCTC 3260 / NRRL B-441) (Lactobacillus paracasei) protein is UvrABC system protein C.